Consider the following 465-residue polypeptide: Kynurenine 3-monooxygenase (465 aa).

Residues 1 to 26 are disordered; the sequence is MSPGIVSQEVNGRQEPTEAARDERHG. The segment covering 15–25 has biased composition (basic and acidic residues); the sequence is EPTEAARDERH. 2 helical membrane passes run 405-427 and 440-462; these read LLFR…SMPY and LLKR…IYAQ.

It belongs to the aromatic-ring hydroxylase family. KMO subfamily. Requires FAD as cofactor.

Its subcellular location is the mitochondrion. It is found in the membrane. The catalysed reaction is L-kynurenine + NADPH + O2 + H(+) = 3-hydroxy-L-kynurenine + NADP(+) + H2O. The protein operates within cofactor biosynthesis; NAD(+) biosynthesis; quinolinate from L-kynurenine: step 1/3. In terms of biological role, catalyzes the hydroxylation of L-kynurenine (L-Kyn) to form 3-hydroxy-L-kynurenine (L-3OHKyn). Required for synthesis of quinolinic acid. The protein is Kynurenine 3-monooxygenase of Drosophila melanogaster (Fruit fly).